The chain runs to 157 residues: Protein NrdI (157 aa).

The protein belongs to the NrdI family.

Probably involved in ribonucleotide reductase function. The chain is Protein NrdI from Mycoplasma capricolum subsp. capricolum (strain California kid / ATCC 27343 / NCTC 10154).